Consider the following 3232-residue polypeptide: D-lysergyl-peptide-synthetase subunit 1 (3232 aa).

The adenylation (A) domain 1 stretch occupies residues 90 to 474 (GCLTYDEMSI…LGRKDDQVKI (385 aa)). The Carrier 1 domain occupies 617-686 (REKLLQGCFA…TLREIVIVST (70 aa)). An O-(pantetheine 4'-phosphoryl)serine modification is found at serine 649. Positions 731–1122 (EDIYPCTHLQ…EHILTQIHSN (392 aa)) are condensation (C) domain 1. Positions 1165-1572 (QAKCQAQPDA…RRKDAQVKIR (408 aa)) are adenylation (A) domain 2. The region spanning 1717-1785 (TEHEISAIWA…TIRKLALARG (69 aa)) is the Carrier 2 domain. Serine 1749 carries the O-(pantetheine 4'-phosphoryl)serine modification. The interval 1835 to 2252 (ERIYPCSPIQ…ALPVLDEDQM (418 aa)) is condensation (C) domain 2. The tract at residues 2276-2675 (QQCLRCPDSP…GRNDDQVKVR (400 aa)) is adenylation (A) domain 3. The Carrier 3 domain occupies 2810 to 2878 (MEAELQRLVG…RVSDLARIVE (69 aa)). The residue at position 2842 (serine 2842) is an O-(pantetheine 4'-phosphoryl)serine. The interval 2943–3218 (LYFSKPVASE…LLHWLHQQHI (276 aa)) is cyclization (Cyc) domain.

This sequence belongs to the NRP synthetase family.

It functions in the pathway alkaloid biosynthesis; ergot alkaloid biosynthesis. D-lysergyl-peptide-synthetase subunit 1; part of the gene cluster that mediates the biosynthesis of fungal ergot alkaloid. DmaW catalyzes the first step of ergot alkaloid biosynthesis by condensing dimethylallyl diphosphate (DMAP) and tryptophan to form 4-dimethylallyl-L-tryptophan. The second step is catalyzed by the methyltransferase easF that methylates 4-dimethylallyl-L-tryptophan in the presence of S-adenosyl-L-methionine, resulting in the formation of 4-dimethylallyl-L-abrine. The catalase easC and the FAD-dependent oxidoreductase easE then transform 4-dimethylallyl-L-abrine to chanoclavine-I which is further oxidized by easD in the presence of NAD(+), resulting in the formation of chanoclavine-I aldehyde. Agroclavine dehydrogenase easG then mediates the conversion of chanoclavine-I aldehyde to agroclavine via a non-enzymatic adduct reaction: the substrate is an iminium intermediate that is formed spontaneously from chanoclavine-I aldehyde in the presence of glutathione. The presence of easA is not required to complete this reaction. Further conversion of agroclavine to paspalic acid is a two-step process involving oxidation of agroclavine to elymoclavine and of elymoclavine to paspalic acid, the second step being performed by the elymoclavine oxidase cloA. Paspalic acid is then further converted to D-lysergic acid. Ergopeptines are assembled from D-lysergic acid and three different amino acids by the D-lysergyl-peptide-synthetases composed each of a monomudular and a trimodular nonribosomal peptide synthetase subunit. LpsB and lpsC encode the monomodular subunits responsible for D-lysergic acid activation and incorporation into the ergopeptine backbone. LpsA1 and A2 subunits encode the trimodular nonribosomal peptide synthetase assembling the tripeptide portion of ergopeptines. LpsA1 is responsible for formation of the major ergopeptine, ergotamine, and lpsA2 for alpha-ergocryptine, the minor ergopeptine of the total alkaloid mixture elaborated by C.purpurea. D-lysergyl-tripeptides are assembled by the nonribosomal peptide synthetases and released as N-(D-lysergyl-aminoacyl)-lactams. Cyclolization of the D-lysergyl-tripeptides is performed by the Fe(2+)/2-ketoglutarate-dependent dioxygenase easH which introduces a hydroxyl group into N-(D-lysergyl-aminoacyl)-lactam at alpha-C of the aminoacyl residue followed by spontaneous condensation with the terminal lactam carbonyl group. The polypeptide is D-lysergyl-peptide-synthetase subunit 1 (Claviceps purpurea (Ergot fungus)).